Consider the following 514-residue polypeptide: MKNIKEVILTGNDLTLEELVLVAREGYKVALSEEAKDSVLESRKIIDDIVENEKVVYGVTTGFGEFCNVSISKEDCKTLQENLIRSHACGYGPKFSTDIVRAIMLTRANALSKGYSGIRIGTLNTLIEMLNAGVHPQIHEKGSLGASGDLAPLAHMVLPMLGLGEAEYKGEIMSGKEAMDKAGIPIIELDAKEGLALINGTQVLTATGALAVYDAIELLKVGDIAAALTIEALRGIKDAFDPRLHVIRAHEGQMATARNILKLIEGSTYVTRQGELRVQDAYSLRCVPQIHGASKDTIDFVKEKVEIEINSVTDNPIVTREGDVISGGNFHGEPMAQPFDFLGIGAAEIANVSERRLERLINHQLNDLPAFLAKHGGLNSGFMITQYAAAALVSENKVLAHPASVDSIPSSANQEDLVSMGTIAARKARDIVDNAKRVLATELMAACQAIDFRADKGFELGKGTKEAYKVIREAIDFIEYDTDIQMYKELDKATELITNGKLLEAVEKAVELEH.

A cross-link (5-imidazolinone (Ala-Gly)) is located at residues 146-148 (ASG). The residue at position 147 (Ser147) is a 2,3-didehydroalanine (Ser).

Belongs to the PAL/histidase family. Post-translationally, contains an active site 4-methylidene-imidazol-5-one (MIO), which is formed autocatalytically by cyclization and dehydration of residues Ala-Ser-Gly.

The protein localises to the cytoplasm. It catalyses the reaction L-histidine = trans-urocanate + NH4(+). The protein operates within amino-acid degradation; L-histidine degradation into L-glutamate; N-formimidoyl-L-glutamate from L-histidine: step 1/3. This chain is Histidine ammonia-lyase, found in Clostridium tetani (strain Massachusetts / E88).